The sequence spans 380 residues: Rab9 effector protein with kelch motifs (380 aa).

Kelch repeat units lie at residues 57-103, 108-154, 159-211, 212-258, 262-311, and 357-380; these read KIFI…FLPS, SIWV…TSSA, QLYV…AAGT, KLFI…AAVA, HVYM…VIPW, and LCFVFGGMNTEGEVYDDCLVTVVD.

In terms of assembly, interacts with PIKFYVE; the interaction recruits RABEPK to the endosomal membrane. Interacts with RAB9 in its GTP-bound conformation. In terms of processing, phosphorylated on Ser residues by PIKFYVE.

Its subcellular location is the cytoplasm. The protein resides in the endosome membrane. Rab9 effector required for endosome to trans-Golgi network (TGN) transport. The protein is Rab9 effector protein with kelch motifs of Mus musculus (Mouse).